The following is a 522-amino-acid chain: Glycerol kinase (522 aa).

Threonine 15 contributes to the substrate binding site. Arginine 19 is an ATP binding site. Residues 89 to 90, tyrosine 143, and 255 to 256 each bind substrate; these read RE and DQ. ATP-binding positions include threonine 276, glycine 321, and 430 to 434; that span reads GATAN.

The protein belongs to the FGGY kinase family. Highly expressed in germinating seeds and senescent leaves, and at lower levels in roots, leaves, flowers and siliques.

It is found in the cytoplasm. Its subcellular location is the cytosol. It catalyses the reaction glycerol + ATP = sn-glycerol 3-phosphate + ADP + H(+). It functions in the pathway polyol metabolism; glycerol degradation via glycerol kinase pathway; sn-glycerol 3-phosphate from glycerol: step 1/1. Key enzyme in the regulation of glycerol uptake and metabolism. Required for resistance to nonhost Pseudomonas bacteria and to the pathogenic fungus B.cinerea. This is Glycerol kinase (GLPK) from Arabidopsis thaliana (Mouse-ear cress).